Reading from the N-terminus, the 300-residue chain is Acetylglutamate kinase (300 aa).

Substrate is bound by residues 73–74 (GG), R95, and N197.

This sequence belongs to the acetylglutamate kinase family. ArgB subfamily.

The protein resides in the cytoplasm. It carries out the reaction N-acetyl-L-glutamate + ATP = N-acetyl-L-glutamyl 5-phosphate + ADP. Its pathway is amino-acid biosynthesis; L-arginine biosynthesis; N(2)-acetyl-L-ornithine from L-glutamate: step 2/4. Functionally, catalyzes the ATP-dependent phosphorylation of N-acetyl-L-glutamate. The sequence is that of Acetylglutamate kinase from Bordetella avium (strain 197N).